The primary structure comprises 401 residues: Thermophilic serine proteinase (401 aa).

A signal peptide spans 1–24 (MKFKAIVSLSLAVSMSLFPFLVEA). A propeptide spanning residues 25 to 121 (ASNDGVESPK…AEPNYLFNAA (97 aa)) is cleaved from the precursor. Aspartate 126 provides a ligand contact to Ca(2+). The 267-residue stretch at 133 to 399 (QYGPQNTYTD…YGRINSYNAV (267 aa)) folds into the Peptidase S8 domain. Residue aspartate 160 is the Charge relay system of the active site. Ca(2+) contacts are provided by proline 168, aspartate 169, aspartate 171, aspartate 179, aspartate 184, and aspartate 186. Histidine 193 functions as the Charge relay system in the catalytic mechanism. Ca(2+) is bound by residues glutamate 204, asparagine 207, threonine 209, and isoleucine 211. Cysteine 258 and cysteine 260 form a disulfide bridge. Na(+) contacts are provided by tyrosine 297, valine 300, and aspartate 323. The Charge relay system role is filled by serine 347.

Belongs to the peptidase S8 family. It depends on Ca(2+) as a cofactor. Na(+) is required as a cofactor.

It localises to the secreted. This chain is Thermophilic serine proteinase, found in Bacillus sp. (strain AK1).